A 699-amino-acid polypeptide reads, in one-letter code: Kinesin-II 85 kDa subunit (699 aa).

The 333-residue stretch at 10–342 (NVRVVVRCRP…LRYANRAKNI (333 aa)) folds into the Kinesin motor domain. Residue 97–104 (GQTGTGKT) coordinates ATP. A coiled-coil region spans residues 341-619 (NIKNKAKINE…EDIGEWQLKC (279 aa)). Disordered stretches follow at residues 369-415 (KQIS…LSPE), 432-456 (EEKKDMVEEDRNTVHRELQRRESEL), and 660-699 (GMKYKPSQGKSGRPKTSSGRPKTGKKKQASMASSIDALLQ). Positions 376–395 (EGLDDDEESGSEESGDEEAG) are enriched in acidic residues. Positions 400–411 (KKKRKGKNPKRK) are enriched in basic residues. The globular stretch occupies residues 620 to 699 (VAYTGNNMRK…MASSIDALLQ (80 aa)). Over residues 667–679 (QGKSGRPKTSSGR) the composition is skewed to polar residues.

The protein belongs to the TRAFAC class myosin-kinesin ATPase superfamily. Kinesin family. Kinesin II subfamily. Heterotrimer of a 115 kDa subunit (KAP115) and two kinesin-like subunits of 95 kDa (KRP95) and 85 kDa (KRP85). Post-translationally, the N-terminus is blocked.

It localises to the cytoplasm. The protein resides in the cytoskeleton. The protein is Kinesin-II 85 kDa subunit (KRP85) of Strongylocentrotus purpuratus (Purple sea urchin).